Reading from the N-terminus, the 58-residue chain is Small ribosomal subunit protein eS31 (58 aa).

Residues Cys-29, Cys-32, Cys-48, and Cys-51 each contribute to the Zn(2+) site. The C4-type zinc finger occupies 29–51 (CPRCGSFMAHHLKPVPRWHCGKC).

This sequence belongs to the eukaryotic ribosomal protein eS31 family. In terms of assembly, part of the 30S ribosomal subunit. Zn(2+) serves as cofactor.

The chain is Small ribosomal subunit protein eS31 from Ignicoccus hospitalis (strain KIN4/I / DSM 18386 / JCM 14125).